Reading from the N-terminus, the 412-residue chain is Polyferredoxin protein MvhB (412 aa).

4Fe-4S ferredoxin-type domains lie at 1–29 (MIVVNKEDCIRCGACQGTCPTAAIEVTPE), 30–57 (DVIYCDICGGEPKCVDACPTGALKIEDL), 67–96 (GRIVFNPDKCNECGDCVEVCPPQILKLDEG), 97–127 (KVKKIPLQGFCVMCQKCVDICPVGVIGVEGI), 138–166 (EGPIFIADCVGCGMCVPECPVDAITLEKV), 168–197 (GVIEIDEDTCIKCGVCAQTCPWNAVYISGK), 207–236 (RKFELDEEACIGCNTCVEACPGDFIVPKSS), 238–266 (LTVELPAICTACGLCEQLCPVDAIDLDVE), 276–305 (EGLVWDEGKCDFIGACANICPNDAIRVVTR), 314–345 (EKVDEEPSFAMCTRCGACTMACPKGALSLVDM), 357–386 (KRVQYNPALCDQCGDCIEACPYDMLKLTDE), and 385–412 (DEKVPLKGFCILCDQCIPACPKGALSLK). 4 residues coordinate [4Fe-4S] cluster: Cys-9, Cys-12, Cys-15, and Cys-19. Positions 76, 79, 82, 86, 107, 110, 113, 117, 146, 149, 152, 156, 177, 180, 183, 187, 216, 219, 222, 226, 246, 249, 252, and 256 each coordinate [4Fe-4S] cluster. [4Fe-4S] cluster contacts are provided by Cys-325, Cys-328, Cys-331, Cys-335, Cys-366, Cys-369, Cys-372, Cys-376, Cys-394, Cys-397, Cys-400, and Cys-404.

[4Fe-4S] cluster is required as a cofactor.

This chain is Polyferredoxin protein MvhB (mvhB), found in Methanothermobacter marburgensis (strain ATCC BAA-927 / DSM 2133 / JCM 14651 / NBRC 100331 / OCM 82 / Marburg) (Methanobacterium thermoautotrophicum).